A 431-amino-acid polypeptide reads, in one-letter code: Gamma-glutamyl phosphate reductase (431 aa).

It belongs to the gamma-glutamyl phosphate reductase family.

It is found in the cytoplasm. It carries out the reaction L-glutamate 5-semialdehyde + phosphate + NADP(+) = L-glutamyl 5-phosphate + NADPH + H(+). The protein operates within amino-acid biosynthesis; L-proline biosynthesis; L-glutamate 5-semialdehyde from L-glutamate: step 2/2. In terms of biological role, catalyzes the NADPH-dependent reduction of L-glutamate 5-phosphate into L-glutamate 5-semialdehyde and phosphate. The product spontaneously undergoes cyclization to form 1-pyrroline-5-carboxylate. The polypeptide is Gamma-glutamyl phosphate reductase (Trichodesmium erythraeum (strain IMS101)).